Consider the following 502-residue polypeptide: mRNA cap guanine-N(7) methyltransferase (502 aa).

The interval 1–118 (MADENPQAQG…SQQEEAMRFS (118 aa)) is disordered. Residues 93-115 (LVDRETLRRRQEERERSQQEEAM) are compositionally biased toward basic and acidic residues. The 357-residue stretch at 146–502 (SKIKGLRSFN…FYHAFCFYKV (357 aa)) folds into the mRNA cap 0 methyltransferase domain. Residue 155–156 (NN) participates in mRNA binding. S-adenosyl-L-methionine-binding positions include Lys-159, Gly-202, Asp-226, Asp-264, 307 to 309 (MFT), and Tyr-312. Over residues 360–369 (ERETAAKKEE) the composition is skewed to basic and acidic residues. The tract at residues 360 to 381 (ERETAAKKEEAEPEDGEVEEDD) is disordered. The span at 370–381 (AEPEDGEVEEDD) shows a compositional bias: acidic residues.

Belongs to the class I-like SAM-binding methyltransferase superfamily. mRNA cap 0 methyltransferase family.

It is found in the nucleus. The catalysed reaction is a 5'-end (5'-triphosphoguanosine)-ribonucleoside in mRNA + S-adenosyl-L-methionine = a 5'-end (N(7)-methyl 5'-triphosphoguanosine)-ribonucleoside in mRNA + S-adenosyl-L-homocysteine. Its function is as follows. Responsible for methylating the 5'-cap structure of mRNAs. This chain is mRNA cap guanine-N(7) methyltransferase (abd1), found in Aspergillus oryzae (strain ATCC 42149 / RIB 40) (Yellow koji mold).